An 897-amino-acid polypeptide reads, in one-letter code: DNA polymerase I (897 aa).

Residues 1 to 317 (MEQPVIKEGT…ILDNTPALDN (317 aa)) enclose the 5'-3' exonuclease domain. Residues 318 to 494 (APKKSRMIVL…RLCEYFEKGG (177 aa)) enclose the 3'-5' exonuclease domain. Positions 498-896 (DLLTLARDIE…FIAKRWNELK (399 aa)) are polymerase.

It belongs to the DNA polymerase type-A family. As to quaternary structure, single-chain monomer with multiple functions.

The catalysed reaction is DNA(n) + a 2'-deoxyribonucleoside 5'-triphosphate = DNA(n+1) + diphosphate. In terms of biological role, in addition to polymerase activity, this DNA polymerase exhibits 3'-5' and 5'-3' exonuclease activity. The sequence is that of DNA polymerase I (polA) from Helicobacter pylori (strain J99 / ATCC 700824) (Campylobacter pylori J99).